The following is a 294-amino-acid chain: MAVEARHMNLFSSQYITNRECVKSQTNMNNGQQIAGGGFPVTIGDRNLQYIDPINSFNKSESELTAISKRQRDSTFDSDALIASQKRRAIAFSPASLIDAELVSQIQQQNSEIDRFVAQQTETLRIELEARQRTQTRMLASAVQNAILKKLKAKDEEIIRMGKLNWVLQERVKNLYVENQIWRDLAQTNEATANNLRSNLEQVLAQVDDLDAFRRPLVEEADDAESSCGSCDGGDVTAVVNGGCKRCGELTASVLVLPCRHLCLCTVCGSSALLRTCPVCDMVMTASVHVNMSS.

The tract at residues 168–204 (LQERVKNLYVENQIWRDLAQTNEATANNLRSNLEQVL) is WRD domain. Residues 183-212 (RDLAQTNEATANNLRSNLEQVLAQVDDLDA) adopt a coiled-coil conformation. The RING-type zinc-finger motif lies at 244 to 281 (CKRCGELTASVLVLPCRHLCLCTVCGSSALLRTCPVCD).

Interacts with the DELLA proteins GAI, RGA, RGL1, RGL2 and RGL3.

It carries out the reaction S-ubiquitinyl-[E2 ubiquitin-conjugating enzyme]-L-cysteine + [acceptor protein]-L-lysine = [E2 ubiquitin-conjugating enzyme]-L-cysteine + N(6)-ubiquitinyl-[acceptor protein]-L-lysine.. The protein operates within protein degradation; proteasomal ubiquitin-dependent pathway. E3 ubiquitin-protein ligase involved in regulation of abiotic stress responses. Not involved in ubiquitination of MYB108/BOS1. Has no effect on the stability of the DELLA proteins. The chain is BOI-related E3 ubiquitin-protein ligase 1 (BRG1) from Arabidopsis thaliana (Mouse-ear cress).